Consider the following 120-residue polypeptide: Ribosome-binding factor A (120 aa).

It belongs to the RbfA family. Monomer. Binds 30S ribosomal subunits, but not 50S ribosomal subunits or 70S ribosomes.

The protein localises to the cytoplasm. One of several proteins that assist in the late maturation steps of the functional core of the 30S ribosomal subunit. Associates with free 30S ribosomal subunits (but not with 30S subunits that are part of 70S ribosomes or polysomes). Required for efficient processing of 16S rRNA. May interact with the 5'-terminal helix region of 16S rRNA. This chain is Ribosome-binding factor A, found in Chlamydia abortus (strain DSM 27085 / S26/3) (Chlamydophila abortus).